Here is an 814-residue protein sequence, read N- to C-terminus: Protein fam-161 (814 aa).

The span at 71–87 (ITQHRSSYKVTKSSSCH) shows a compositional bias: polar residues. Disordered regions lie at residues 71–130 (ITQH…SWSQ), 150–255 (RHQV…ATSA), 569–610 (SRSK…THAT), and 714–814 (MKSA…SSEA). Residues 99-111 (MPRHLDLKPRSSE) are compositionally biased toward basic and acidic residues. The segment covering 174–193 (STAPSQVSVTSSVQSVAALS) has biased composition (low complexity). Polar residues-rich tracts occupy residues 194–207 (GQNP…TPSH) and 216–235 (RTHQ…TLQN). Basic residues predominate over residues 236–249 (PRHRTSSASRHHST). Polar residues-rich tracts occupy residues 570 to 583 (RSKS…NCQE) and 594 to 610 (ENLP…THAT). The stretch at 606-689 (STHATQLREE…LAEMKQRVLN (84 aa)) forms a coiled coil. The segment covering 714–727 (MKSAKGRGIERVQS) has biased composition (basic and acidic residues). A compositionally biased stretch (polar residues) spans 728 to 745 (QEKQQSIGRRSSEVSGSG). Residues 751–765 (KGYEESFESEDKSEK) show a composition bias toward basic and acidic residues. Low complexity-rich tracts occupy residues 766-779 (SGSS…SGSE) and 795-814 (SKST…SSEA).

It belongs to the FAM161 family. As to expression, expressed in amphid and phasmid ciliated neurons.

Its subcellular location is the cell projection. The protein resides in the cilium. It localises to the cytoplasm. The protein localises to the cytoskeleton. It is found in the cilium axoneme. This Caenorhabditis elegans protein is Protein fam-161.